The chain runs to 259 residues: Hemin import ATP-binding protein HmuV (259 aa).

Residues 6-242 (IQGRDLCVTY…ERIEQVYGYQ (237 aa)) form the ABC transporter domain. 38–45 (GPNGAGKS) contributes to the ATP binding site.

This sequence belongs to the ABC transporter superfamily. Heme (hemin) importer (TC 3.A.1.14.5) family. The complex is composed of two ATP-binding proteins (HmuV), two transmembrane proteins (HmuU) and a solute-binding protein (HmuT).

The protein resides in the cell inner membrane. Functionally, part of the ABC transporter complex HmuTUV involved in hemin import. Responsible for energy coupling to the transport system. The polypeptide is Hemin import ATP-binding protein HmuV (Vibrio cholerae serotype O1 (strain ATCC 39315 / El Tor Inaba N16961)).